Reading from the N-terminus, the 185-residue chain is Ribosome-recycling factor (185 aa).

It belongs to the RRF family.

The protein localises to the cytoplasm. Responsible for the release of ribosomes from messenger RNA at the termination of protein biosynthesis. May increase the efficiency of translation by recycling ribosomes from one round of translation to another. This is Ribosome-recycling factor from Buchnera aphidicola subsp. Acyrthosiphon pisum (strain Tuc7).